We begin with the raw amino-acid sequence, 795 residues long: Serine/threonine-protein kinase MARK1 (795 aa).

Positions Met1–Pro41 are disordered. Thr5 carries the phosphothreonine modification. The Protein kinase domain occupies Tyr60–Met311. ATP contacts are provided by residues Ile66–Val74 and Lys89. Residue Asp182 is the Proton acceptor of the active site. Position 208 is a phosphothreonine (Thr208). Position 215 is a phosphothreonine; by LKB1 and TAOK1 (Thr215). The residue at position 219 (Ser219) is a Phosphoserine; by GSK3-beta. The UBA domain occupies Asp329–Arg370. Disordered stretches follow at residues Gly377–Ser498 and Gln518–Ser699. A phosphoserine mark is found at Ser382, Ser390, Ser393, Ser403, Ser423, and Ser444. Residues Cys387–Ser403 are compositionally biased toward polar residues. A compositionally biased stretch (basic and acidic residues) spans Ser447 to Arg459. A compositionally biased stretch (polar residues) spans Gly462–Thr473. The residue at position 475 (Ser475) is a Phosphoserine. Polar residues predominate over residues Thr486 to Ser495. Low complexity-rich tracts occupy residues Ser523 to Ala547 and Pro585 to Pro599. Ser588 carries the phosphoserine modification. Thr613 carries the phosphothreonine; by PKC/PRKCZ modification. Residues Gly647 to Thr657 show a composition bias toward polar residues. Composition is skewed to basic and acidic residues over residues Val661–Thr676 and Asp683–Pro697. The residue at position 666 (Ser666) is a Phosphoserine. Residues Asp746–Leu795 enclose the KA1 domain.

The protein belongs to the protein kinase superfamily. CAMK Ser/Thr protein kinase family. SNF1 subfamily. Interacts with MAPT/TAU. Mg(2+) is required as a cofactor. In terms of processing, phosphorylated at Thr-215 by STK11/LKB1 in complex with STE20-related adapter-alpha (STRADA) pseudo kinase and CAB39. Phosphorylation at Thr-215 by TAOK1 activates the kinase activity, leading to phosphorylation and detachment of MAPT/TAU from microtubules. Phosphorylation at Ser-219 by GSK3-beta (GSK3B) inhibits the kinase activity. Phosphorylation at Thr-613 by PRKCZ/aPKC in polarized epithelial cells inhibits the kinase activity.

Its subcellular location is the cell membrane. It is found in the cytoplasm. The protein localises to the cytoskeleton. It localises to the cell projection. The protein resides in the dendrite. The enzyme catalyses L-seryl-[protein] + ATP = O-phospho-L-seryl-[protein] + ADP + H(+). It catalyses the reaction L-threonyl-[protein] + ATP = O-phospho-L-threonyl-[protein] + ADP + H(+). The catalysed reaction is L-seryl-[tau protein] + ATP = O-phospho-L-seryl-[tau protein] + ADP + H(+). It carries out the reaction L-threonyl-[tau protein] + ATP = O-phospho-L-threonyl-[tau protein] + ADP + H(+). With respect to regulation, inhibited by phosphorylation at Ser-219. Activated by phosphorylation on Thr-215. Functionally, serine/threonine-protein kinase. Involved in cell polarity and microtubule dynamics regulation. Phosphorylates DCX, MAP2 and MAP4. Phosphorylates the microtubule-associated protein MAPT/TAU. Involved in cell polarity by phosphorylating the microtubule-associated proteins MAP2, MAP4 and MAPT/TAU at KXGS motifs, causing detachment from microtubules, and their disassembly. Involved in the regulation of neuronal migration through its dual activities in regulating cellular polarity and microtubule dynamics, possibly by phosphorylating and regulating DCX. Also acts as a positive regulator of the Wnt signaling pathway, probably by mediating phosphorylation of dishevelled proteins (DVL1, DVL2 and/or DVL3). The chain is Serine/threonine-protein kinase MARK1 from Mus musculus (Mouse).